The following is a 337-amino-acid chain: 2-oxoglutarate receptor 1 (337 aa).

The Extracellular portion of the chain corresponds to 1–38; sequence MIEPLDSPASDSDFLDYPSALGNCTDEQISFKMQYLPV. The N-linked (GlcNAc...) asparagine glycan is linked to N23. A helical transmembrane segment spans residues 39–59; it reads IYSIIFLVGFPGNTVAISIYI. Over 60-69 the chain is Cytoplasmic; the sequence is FKMRPWRGST. A helical transmembrane segment spans residues 70-90; the sequence is VIMLNLALTDLLYLTSLPFLI. The Extracellular portion of the chain corresponds to 91-116; sequence HYYASGENWIFGDFMCKFIRFGFHFN. An intrachain disulfide couples C106 to C183. The helical transmembrane segment at 117–137 threads the bilayer; that stretch reads LYSSILFLTCFSLFRYVVIIH. Residues 138 to 151 are Cytoplasmic-facing; sequence PMSCFSIQKTRWAV. A helical membrane pass occupies residues 152–172; that stretch reads VACAGVWVISLVAVMPMTFLI. The Extracellular segment spans residues 173–200; it reads TSTTRTNRSACLDLTSSDDLTTIKWYNL. A helical transmembrane segment spans residues 201-221; that stretch reads ILTATTFCLPLVIVTLCYTTI. At 222–242 the chain is on the cytoplasmic side; the sequence is ISTLTHGPRTHSCFKQKARRL. The helical transmembrane segment at 243–263 threads the bilayer; that stretch reads TILLLLVFYICFLPFHILRVI. The Extracellular segment spans residues 264–284; it reads RIESRLLSISCSIESHIHEAY. The chain crosses the membrane as a helical span at residues 285-305; that stretch reads IVSRPLAALNTFGNLLLYVVV. At 306–337 the chain is on the cytoplasmic side; sequence SNNFQQAFCSIVRCKASGDLEQGKKDSCSNNP.

This sequence belongs to the G-protein coupled receptor 1 family. As to expression, predominantly expressed in the kidney with limited expression in the testis and the smooth muscle. Expressed in SLC26A4/pendrin-positive type B and non-A non-B intercalated cells (at protein level).

It is found in the cell membrane. G protein-coupled receptor for dicarboxylates and amino dicarboxylates. Receptor for itaconate produced by activated macrophages upon bacterial infection. In the respiratory epithelium, couples the binding of itaconate to the activation of GNA11 and downstream intracellular Ca(2+) release, leading to mucocilliary clearance of airborne pathogens. Receptor for leukotriene E4 (LTE4) produced by mast cells upon allergic inflammation. Binds with high affinity to LTE4 and elicits mucin release from pulmonary epithelium in response to airborne fungi allergens. Regulates mucin-producing goblet cell homeostasis. Receptor for alpha-ketoglutarate produced by proximal tubule renal cells upon metabolic alkalosis. In an intrarenal paracrine signaling pathway, binds alpha-ketoglutarate and drives transepithelial salt reabsorption and bicarbonate secretion by SLC26A4/pendrin-positive intercalated cells. The polypeptide is 2-oxoglutarate receptor 1 (Oxgr1) (Mus musculus (Mouse)).